The sequence spans 314 residues: L-lactate dehydrogenase 2 (314 aa).

NAD(+) contacts are provided by residues Val-16, Asp-37, Lys-42, Tyr-68, and 82 to 83 (GV). Positions 85 and 91 each coordinate substrate. NAD(+)-binding positions include Ser-104, 121–123 (ASN), and Thr-146. 123-126 (NPVD) is a binding site for substrate. 151 to 154 (DTTR) is a substrate binding site. Arg-156 and His-171 together coordinate beta-D-fructose 1,6-bisphosphate. Residue His-178 is the Proton acceptor of the active site. Tyr-223 bears the Phosphotyrosine mark. Position 232 (Thr-232) interacts with substrate.

Belongs to the LDH/MDH superfamily. LDH family. As to quaternary structure, homotetramer.

It is found in the cytoplasm. The enzyme catalyses (S)-lactate + NAD(+) = pyruvate + NADH + H(+). The protein operates within fermentation; pyruvate fermentation to lactate; (S)-lactate from pyruvate: step 1/1. Its activity is regulated as follows. Allosterically activated by fructose 1,6-bisphosphate (FBP). Functionally, catalyzes the conversion of lactate to pyruvate. The protein is L-lactate dehydrogenase 2 of Lactococcus lactis subsp. lactis (strain IL1403) (Streptococcus lactis).